The primary structure comprises 618 residues: Methionine--tRNA ligase (618 aa).

The 'HIGH' region motif lies at 12–22; it reads YYVNAEPHLGH. Residues cysteine 127, cysteine 130, cysteine 144, and histidine 147 each coordinate Zn(2+). Residues 297-301 carry the 'KMSKS' region motif; that stretch reads KMSKT. Lysine 300 provides a ligand contact to ATP. Positions 518 to 618 constitute a tRNA-binding domain; the sequence is DFAKVELRVA…GEVPPGAVVK (101 aa).

It belongs to the class-I aminoacyl-tRNA synthetase family. MetG type 2A subfamily. Homodimer. The cofactor is Zn(2+).

The protein localises to the cytoplasm. It catalyses the reaction tRNA(Met) + L-methionine + ATP = L-methionyl-tRNA(Met) + AMP + diphosphate. In terms of biological role, is required not only for elongation of protein synthesis but also for the initiation of all mRNA translation through initiator tRNA(fMet) aminoacylation. This Thermus thermophilus (strain ATCC 27634 / DSM 579 / HB8) protein is Methionine--tRNA ligase (metG).